A 757-amino-acid polypeptide reads, in one-letter code: Polyribonucleotide nucleotidyltransferase (757 aa).

2 residues coordinate Mg(2+): D487 and D493. Positions 554-613 (PRITTVRVKPDQIRLIIGPGGKTIKGIVDQTGVAIDVEDDGTVNVASADSDAVKRALDII) constitute a KH domain. An S1 motif domain is found at 623 to 691 (GATYKGTVKR…REGKIRLSRR (69 aa)). A disordered region spans residues 697 to 757 (PEGEEGDRAR…PPRERRERRS (61 aa)). 2 stretches are compositionally biased toward basic and acidic residues: residues 702–711 (GDRARERMAQ) and 719–757 (PRRD…ERRS).

It belongs to the polyribonucleotide nucleotidyltransferase family. Mg(2+) serves as cofactor.

The protein localises to the cytoplasm. It catalyses the reaction RNA(n+1) + phosphate = RNA(n) + a ribonucleoside 5'-diphosphate. Involved in mRNA degradation. Catalyzes the phosphorolysis of single-stranded polyribonucleotides processively in the 3'- to 5'-direction. This is Polyribonucleotide nucleotidyltransferase from Sorangium cellulosum (strain So ce56) (Polyangium cellulosum (strain So ce56)).